The following is a 237-amino-acid chain: Ribosomally synthesized cyclic peptide ustiloxin B precursosr (237 aa).

Positions 1 to 19 (MKLILTLLVSGLCALAAPA) are cleaved as a signal peptide. Propeptides lie at residues 20-22 (AKR) and 234-237 (HGGH).

In terms of processing, ustA is processed by the subtilisin-like endoprotease kex2 that is outside the ustiloxin B gene cluster, at the C-terminal side of Arg-Lys, after transfer to Golgi apparatus through the endoplasmic reticulum (ER). Cleavage by kex2 generates 16 peptides YAIG-I to YAIG-XVI. To process the precursor peptide further, at least two peptidases are necessary to cleave the N-terminal and C-terminal sides of the Tyr-Ala-Ile-Gly core peptide which serves as backbone for the synthesis of ustiloxin B, through cyclization and modification of the tyrosine. One of the two peptidases must be the serine peptidase ustP; and the other pepdidase is probably ustH. Macrocyclization of the core peptide derived from ustA requires the tyrosinase ustQ, as well as the homologous oxidases ustYa and ustYb, and leads to the production of the first cyclization product N-desmethylustiloxin F. For the formation of N-desmethylustiloxin F, three oxidation steps are required, hydroxylation at the benzylic position, hydroxylation at either the aromatic ring of Tyr or beta-position of Ile, and oxidative cyclization. UstQ may catalyze the oxidation of a phenol moiety, whereas the ustYa and ustYb are most likely responsible for the remaining two-step oxidations. N-desmethylustiloxin F is then methylated by ustM to yield ustiloxin F which in turn substrate of the cytochrome P450 monooxygenase ustC which catalyzes the formation of S-deoxyustiloxin H. The flavoprotein monooxygenases ustF1 and ustF2 then participate in the modification of the side chain of S-deoxyustiloxin H, leading to the synthesis of an oxime intermediate, via ustiloxin H. Finally, carboxylative dehydration performed by the cysteine desulfurase-like protein ustD yields ustiloxin B.

It participates in mycotoxin biosynthesis. In terms of biological role, ribosomally synthesized cyclic peptide ustiloxin B precursor: Part of the gene cluster that mediates the biosynthesis of the secondary metabolite ustiloxin B, an antimitotic tetrapeptide. The ustA translated product contains a 16-fold repeated peptide embedding the tetrapeptide Tyr-Ala-Ile-Gly, that is converted into the cyclic moiety of ustiloxin B. The protein is Ribosomally synthesized cyclic peptide ustiloxin B precursosr of Aspergillus flavus (strain ATCC 200026 / FGSC A1120 / IAM 13836 / NRRL 3357 / JCM 12722 / SRRC 167).